The primary structure comprises 119 residues: UPF0342 protein GTNG_0551 (119 aa).

The protein belongs to the UPF0342 family.

The chain is UPF0342 protein GTNG_0551 from Geobacillus thermodenitrificans (strain NG80-2).